The primary structure comprises 133 residues: Holo-[acyl-carrier-protein] synthase (133 aa).

The Mg(2+) site is built by Asp-8 and Glu-57.

The protein belongs to the P-Pant transferase superfamily. AcpS family. It depends on Mg(2+) as a cofactor.

The protein resides in the cytoplasm. It catalyses the reaction apo-[ACP] + CoA = holo-[ACP] + adenosine 3',5'-bisphosphate + H(+). Transfers the 4'-phosphopantetheine moiety from coenzyme A to a Ser of acyl-carrier-protein. The sequence is that of Holo-[acyl-carrier-protein] synthase from Bartonella quintana (strain Toulouse) (Rochalimaea quintana).